A 72-amino-acid chain; its full sequence is Neuropeptide SIFamide (72 aa).

Residues 1–26 (MALRFTLTLLLVTILVAAILLGSSEA) form the signal peptide. An N-linked (GlcNAc...) asparagine glycan is attached at asparagine 34. Phenylalanine 38 carries the phenylalanine amide modification. Residues 42 to 72 (NSLDYDSAKMSAVCEVAMEACPMWFPQNDSK) constitute a propeptide that is removed on maturation.

It belongs to the FARP (FMRFamide related peptide) family. In terms of tissue distribution, strongly expressed in two pairs of neurons in the pars intercerebralis (at protein level).

It is found in the secreted. Functionally, ligand for the neuropeptide SIFamide receptor. Modulates sexual behavior by negatively regulating female receptivity to male courtship and by playing a role in male sex discrimination. Also involved in promoting sleep. The polypeptide is Neuropeptide SIFamide (Drosophila melanogaster (Fruit fly)).